The sequence spans 677 residues: Methionine--tRNA ligase (677 aa).

Residues 15–25 (PYANGSIHLGH) carry the 'HIGH' region motif. Zn(2+) is bound by residues Cys146, Cys149, Cys159, and Cys162. A 'KMSKS' region motif is present at residues 333–337 (KMSKS). An ATP-binding site is contributed by Lys336. The tRNA-binding domain maps to 575-677 (DFAKVDLRVA…AGAKPGHQVK (103 aa)).

It belongs to the class-I aminoacyl-tRNA synthetase family. MetG type 1 subfamily. Homodimer. The cofactor is Zn(2+).

The protein resides in the cytoplasm. It catalyses the reaction tRNA(Met) + L-methionine + ATP = L-methionyl-tRNA(Met) + AMP + diphosphate. Functionally, is required not only for elongation of protein synthesis but also for the initiation of all mRNA translation through initiator tRNA(fMet) aminoacylation. This is Methionine--tRNA ligase from Escherichia coli O127:H6 (strain E2348/69 / EPEC).